Reading from the N-terminus, the 66-residue chain is MSGKCDNCDCADSTQCVKKGNSYDLVIVETENRSMDTVFVDAPAAEHDGKCKCGTGCSCVSCTCGH.

Belongs to the metallothionein superfamily. Type 15 family.

Metallothioneins have a high content of cysteine residues that bind various heavy metals. The polypeptide is Metallothionein-like protein type 3 (MT2) (Malus domestica (Apple)).